We begin with the raw amino-acid sequence, 243 residues long: Probable transcriptional regulatory protein BDI_1233 (243 aa).

It belongs to the TACO1 family.

It localises to the cytoplasm. In Parabacteroides distasonis (strain ATCC 8503 / DSM 20701 / CIP 104284 / JCM 5825 / NCTC 11152), this protein is Probable transcriptional regulatory protein BDI_1233.